Reading from the N-terminus, the 489-residue chain is Bridging integrator 2 (489 aa).

One can recognise a BAR domain in the interval 28–244 (VLQKLGKTVE…MSKLEKQHSN (217 aa)). Residues 267-302 (QSCAASSPVSPVSPVSPVTSPTSPSATSEPESVSAT) are compositionally biased toward low complexity. Residues 267–489 (QSCAASSPVS…ASGGLVGLFL (223 aa)) form a disordered region. Residue Ser273 is modified to Phosphoserine. Positions 311–331 (GGEDSCESQESLKDEEADEAQ) are enriched in acidic residues. Ser357 is subject to Phosphoserine. The span at 358–368 (QEEALSSSAQS) shows a compositional bias: low complexity. Residues Ser380, Ser392, Ser420, Ser422, Ser424, Ser430, Ser435, Ser439, and Ser443 each carry the phosphoserine modification.

Homodimer. Interacts with BIN1. Interacts with ARHGEF6 (via SH3 domain), ARHGEF7 (via SH3 domain), SH3GL1, SH3GL2 and SH3GL3. Identified in a complex with ARHGEF6 and GIT2.

The protein resides in the cytoplasm. The protein localises to the cell projection. It localises to the podosome membrane. It is found in the cell cortex. Its subcellular location is the phagocytic cup. Functionally, promotes cell motility and migration, probably via its interaction with the cell membrane and with podosome proteins that mediate interaction with the cytoskeleton. Modulates membrane curvature and mediates membrane tubulation. Inhibits phagocytosis. Plays a role in podosome formation. The sequence is that of Bridging integrator 2 (Bin2) from Mus musculus (Mouse).